We begin with the raw amino-acid sequence, 544 residues long: Probable protein kinase UbiB (544 aa).

One can recognise a Protein kinase domain in the interval 123-501 (DFDLVPLASA…KRQQATGKFL (379 aa)). Residues 129–137 (LASASIAQV) and Lys152 contribute to the ATP site. The active-site Proton acceptor is the Asp287. The next 2 membrane-spanning stretches (helical) occupy residues 496–516 (ATGKFLFGVGATLVVCSAILV) and 519–539 (TYEQLSLATAIAGVTFWLFSW).

This sequence belongs to the ABC1 family. UbiB subfamily.

Its subcellular location is the cell inner membrane. Its pathway is cofactor biosynthesis; ubiquinone biosynthesis [regulation]. In terms of biological role, is probably a protein kinase regulator of UbiI activity which is involved in aerobic coenzyme Q (ubiquinone) biosynthesis. The protein is Probable protein kinase UbiB of Vibrio vulnificus (strain CMCP6).